Here is a 107-residue protein sequence, read N- to C-terminus: Protamine-2 (107 aa).

The segment at 1-94 (MVRYRMRSPS…RRGCRRSRRR (94 aa)) is disordered. Phosphoserine is present on residues serine 8, serine 10, and serine 33. Over residues 43-94 (THRGHHHHRHRRCSRKRLHRIHKRRRSCRRRRRHSCRHRRRHRRGCRRSRRR) the composition is skewed to basic residues.

It belongs to the protamine P2 family. Interacts with TDRP. Proteolytic processing into mature chains is required for histone eviction during spermatogenesis. Transition proteins (TNP1 and TNP2) are required for processing. Expressed in spermatids (at protein level).

It localises to the nucleus. The protein localises to the chromosome. Functionally, protamines substitute for histones in the chromatin of sperm during the haploid phase of spermatogenesis. They compact sperm DNA into a highly condensed, stable and inactive complex. The protein is Protamine-2 (Prm2) of Mus musculus (Mouse).